We begin with the raw amino-acid sequence, 231 residues long: uncharacterized protein (231 aa).

The SWIM-type zinc-finger motif lies at 43-76; the sequence is YKVKVDLDNNYFGLCTCQYKYNCKHAYALIEAYE.

This is an uncharacterized protein from Methanocaldococcus jannaschii (strain ATCC 43067 / DSM 2661 / JAL-1 / JCM 10045 / NBRC 100440) (Methanococcus jannaschii).